The following is a 514-amino-acid chain: Importin subunit alpha-3 (514 aa).

An IBB domain is found at 1–51 (MSSNRQAYYKNNAKEQIGKEKRNEEVVSIRKDKREEAISKRRNINTQIEDD). Residues 1–62 (MSSNRQAYYK…ETSTTPPGPF (62 aa)) form a disordered region. Residues 12–39 (NAKEQIGKEKRNEEVVSIRKDKREEAIS) show a composition bias toward basic and acidic residues. ARM repeat units follow at residues 101–142 (IDDL…TSEQ), 143–187 (TQAV…FRDY), 188–226 (CLELGILQPLLQFINPEIPIGFLRNVTWVIVNLCRCKDP), 227–271 (APSP…EHIQ), 272–311 (MVIEAQVVTHLVPLLGHVDVKVQTAALRAVGNIVTGTDEQ), 312–353 (TQLV…NQQQ), 354–393 (VQDVFDAGIMPMIIHLLDRGDFPTQKEAAWAISNVTISGR), and 394–436 (PNQV…KMAG). The segment at 485–514 (GNVEGAQSSAFGGDVPPVPDAPNGGWNFGK) is disordered.

It belongs to the importin alpha family. In terms of assembly, forms a complex with an importin beta subunit. May interact with transcription factor cebp-1 (via N-terminus). Interacts with cmk-1; affinity for cmk-1 is increased in the presence of Ca(2+) and calmodulin and leads to increased nuclear accumulation of cmk-1 in FLP neurons upon prolonged heat activation. Expressed in larval and adult germline and somatic tissues, including neurons.

The protein localises to the cytoplasm. Its subcellular location is the nucleus. Functionally, binds specifically and directly to substrates containing either a simple or bipartite NLS motif. Promotes docking of import substrates to the nuclear envelope. Seems to act as a cytosolic receptor for both simple and bipartite NLS motifs. Necessary for correct nucleoporin localization within the germline. Essential gene for embryonic and larval development. May be dispensable for axon development, but required for axon regeneration in both mechanosensory and motor neurons. Required for oogenic development, ima-1 and ima-2 cannot functionally compensate for loss of ima-3. This is Importin subunit alpha-3 (ima-3) from Caenorhabditis elegans.